The chain runs to 498 residues: Transcription factor bHLH78 (498 aa).

Disordered stretches follow at residues 1-24 (MDNELFMNTEFPPPPEMATHFEHQ) and 207-297 (LVSP…PPKD). Positions 233-246 (NPISTASPSPSFSK) are enriched in polar residues. Residues 259-270 (SSEEKGGKRRRE) are compositionally biased toward basic and acidic residues. The segment covering 271-281 (EEDDEEEEGEG) has biased composition (acidic residues). A bHLH domain is found at 307–357 (QATDSHSLAERVRREKIGERMKLLQDLVPGCNKVTGKALMLDEIINYVQSL).

As to quaternary structure, homodimer. Binds reversibly to CRY2 after blue light illumination. As to expression, expressed constitutively in roots, leaves, stems, and flowers.

The protein localises to the nucleus. Functionally, transcription factor that binds DNA to G box 5'-CACGTG-3' and to E-box 5'-CANNTG-3'. Binds to chromatin DNA of the FT gene and promotes its expression, and thus triggers flowering in response to blue light. The sequence is that of Transcription factor bHLH78 (BHLH78) from Arabidopsis thaliana (Mouse-ear cress).